The sequence spans 383 residues: U-box domain-containing protein 63 (383 aa).

Residues 166 to 186 (PDGNVSNSHRNTQQKRDFASV) form a disordered region. The 73-residue stretch at 201–273 (SLKAILSDPV…HAFRQEEDSD (73 aa)) folds into the U-box domain.

The catalysed reaction is S-ubiquitinyl-[E2 ubiquitin-conjugating enzyme]-L-cysteine + [acceptor protein]-L-lysine = [E2 ubiquitin-conjugating enzyme]-L-cysteine + N(6)-ubiquitinyl-[acceptor protein]-L-lysine.. Its pathway is protein modification; protein ubiquitination. Functionally, functions as an E3 ubiquitin ligase. The chain is U-box domain-containing protein 63 (PUB63) from Arabidopsis thaliana (Mouse-ear cress).